The following is a 90-amino-acid chain: MKLPIIFLTLLIFVSSCTSVLINGSSDEERTYSFSPRASPFDPRSLNQELKIGRIGYCFDCARACMRRGKYIRTCSFERKLCRYSISDIK.

The first 19 residues, 1 to 19 (MKLPIIFLTLLIFVSSCTS), serve as a signal peptide directing secretion. Disulfide bonds link cysteine 58–cysteine 75 and cysteine 61–cysteine 82.

Belongs to the DEFL family. As to expression, expressed in the pistil. Detected exclusively in the synergid cells.

It is found in the secreted. Functionally, inactive pollen tube attractants guiding pollen tubes to the ovular micropyle. The polypeptide is Protein LURE 1.5 (Arabidopsis thaliana (Mouse-ear cress)).